A 381-amino-acid polypeptide reads, in one-letter code: Dihydroorotate dehydrogenase (quinone) (381 aa).

Residues Ala77 to Lys81 and Ala101 contribute to the FMN site. Residue Lys81 coordinates substrate. Asn126–Gly129 contributes to the substrate binding site. Positions 158 and 191 each coordinate FMN. Residue Asn191 coordinates substrate. The active-site Nucleophile is the Ser194. Asn196 serves as a coordination point for substrate. Lys229 and Thr257 together coordinate FMN. Residue Asn258–Thr259 coordinates substrate. Residues Gly287, Gly316, and Tyr337–Thr338 contribute to the FMN site.

Belongs to the dihydroorotate dehydrogenase family. Type 2 subfamily. As to quaternary structure, monomer. FMN is required as a cofactor.

It localises to the cell membrane. The enzyme catalyses (S)-dihydroorotate + a quinone = orotate + a quinol. It functions in the pathway pyrimidine metabolism; UMP biosynthesis via de novo pathway; orotate from (S)-dihydroorotate (quinone route): step 1/1. Its function is as follows. Catalyzes the conversion of dihydroorotate to orotate with quinone as electron acceptor. The chain is Dihydroorotate dehydrogenase (quinone) (pyrD) from Synechocystis sp. (strain ATCC 27184 / PCC 6803 / Kazusa).